The primary structure comprises 1347 residues: Protein dispatched homolog 3 (1347 aa).

The Cytoplasmic portion of the chain corresponds to 1-67; that stretch reads MDSEDDPLLQ…LGWAFTNPCC (67 aa). Residues 68-88 traverse the membrane as a helical segment; it reads AGLVLFLGCSIPMVLSAFMFL. At 89-417 the chain is on the lumenal side; that stretch reads YYPPLDIDIS…YEVRRTFNND (329 aa). Positions 156–207 are disordered; that stretch reads GNHSRPASRAPRSAPRDTVATQTSAANSSERRRREAPSPEGQVTNQSRARRG. Asn-157 is a glycosylation site (N-linked (GlcNAc...) asparagine). Positions 159 to 168 are enriched in low complexity; it reads SRPASRAPRS. Residues 412–570 form the SSD domain; sequence RTFNNDMLLA…LFTMPAALGL (159 aa). The chain crosses the membrane as a helical span at residues 418–438; that stretch reads MLLAFISSSCIAALVYILTSC. Position 439 (Ser-439) is a topological domain, cytoplasmic. A helical transmembrane segment spans residues 440 to 460; that stretch reads VFLSFFGIASIGLSCLVALFL. At 461–463 the chain is on the lumenal side; the sequence is YHV. The helical transmembrane segment at 464–484 threads the bilayer; it reads VFGIQYLGILNGVAAFVIVGI. The Cytoplasmic segment spans residues 485–528; sequence GVDDVFVFINTYRQATHLEDPQLRMIHTIQTAGKATFFTSLTTA. A helical membrane pass occupies residues 529-549; sequence AAYAANVFSQIPAVHDFGLFM. Ser-550 is a topological domain (lumenal). Residues 551–571 traverse the membrane as a helical segment; sequence LIVTCCWLAVLFTMPAALGLW. Topologically, residues 572-684 are cytoplasmic; sequence SLYMAPLESS…WVLWAAVKSR (113 aa). Residues 685-705 form a helical membrane-spanning segment; that stretch reads WVIVGLFASILILSLVFASRL. Residues 706–1137 lie on the Lumenal side of the membrane; that stretch reads RPASRAPLLF…IFMEIIGVQS (432 aa). Asn-976 carries an N-linked (GlcNAc...) asparagine glycan. The chain crosses the membrane as a helical span at residues 1138-1158; the sequence is ALYGLVLSLLICVAAVAVFTT. His-1159 is a topological domain (cytoplasmic). A helical membrane pass occupies residues 1160–1180; the sequence is VLLLLPVLLSILGIVCLVVTI. At 1181-1246 the chain is on the lumenal side; that stretch reads MYWSGWEMGA…TLEAVRHVGV (66 aa). Residues 1247 to 1267 traverse the membrane as a helical segment; it reads AIVSSALTTVIATVPLFFCII. The Cytoplasmic portion of the chain corresponds to 1268-1281; that stretch reads APFAKFGKIVALNT. Residues 1282 to 1302 form a helical membrane-spanning segment; that stretch reads GVSILYTLTVSTALLGIMAPG. Topologically, residues 1303–1310 are lumenal; the sequence is SFTRTRTS. The chain crosses the membrane as a helical span at residues 1311-1331; it reads FLKALGAVLLAGALGLGACLV. Over 1332-1347 the chain is Cytoplasmic; the sequence is LLRSGYKIPLPSGATL.

Belongs to the patched family. As to expression, expressed in brain, retina, testis and thymus.

It localises to the endoplasmic reticulum membrane. Its subcellular location is the nucleus membrane. The protein resides in the cytoplasmic vesicle membrane. Functionally, plays a role in neuronal proliferation and differentiation. Plays a role in the accumulation of cellular cholesterol. Involved in intracellular lipid droplet formation. May contribute to cholesterol homeostasis in neuronal cells. The chain is Protein dispatched homolog 3 from Mus musculus (Mouse).